We begin with the raw amino-acid sequence, 1388 residues long: MNDLMKILGQTGQAATFDQIRIQIASPEQIRSWSYGEIKKPETINYRTFKPERDGLFCARIFGPIKDYECLCGKYKRMKFRGIICEKCGVEVTLAKVRRERMGHIELASPVAHIWFLKSLPSRIATMVEMTLKDLEKVLYFENYIVLDPYTTDLKRYQLLSEDDLYAKQDEFGEDGFKAGIGAEAVKSILAGIDLEAERAIMRADLKEATSEAKRKKLVKRLKLVEAFIESGTRPEWMIMDVVPVIPPELRPLVPLDGGRFATSDLNDLYRRVINRNNRLKRLIELRAPDIIVRNEKRMLQESVDALFDNGRRGRAITGTNKRPLKSLSDMLKGKQGRFRQNLLGKRVDYSGRSVIVVGPELKLHQCGLPKKMALELFKPFIYAKLEKYGLATTIKAAKRMVEKERPEVWDILEEVIREHPVLLNRAPTLHRLGIQAFEPILIEGKAIQLHPLVCTAFNADFDGDQMAVHVPLSIEAQLEARVLMMSTNNILNPANGKPIIVPSQDIVLGLYYLSLETPAFTGVEDKEAPLFGTMGEIEHALDSGYLKLHDKIRARVVRTHPDGSRTTEVVPTTPGRMMIGQLLPKHHDVPFALVNQLLTKKKVSDVIDAVYRHCGQKESVIFCDRLMGLGFRQAAKAGISFGKDDMVIPAEKYGLLEKTQAEVKEYEAQYHDGLITAGERYNKVIDAWSRCNDEVAAAMMREISRQDPGKPTNSVWMMSHSGARGSPTQMRQLAGMRGLMAKPSGEIIEQPILSNFKEGLTVAEYFNSTHGARKGLADTALKTANSGYLTRRLVDVAQDCIIVTADCGTERGLTMRAVMDGGEVVSSLSERILGRTAAEDVLDPADGSVIVKANELIGEIDSMHIEKLGVESVKIRSVLTCEAKVGVCAKCYGRDLARGTPVNIGEAVGVIAAQSIGEPGTQLTMRTFHIGGAAQRGAEQSSVEASHDGTVTIRNRNVVSNSAGAPIVMSRNCEIALNDASGRERARFRVPYGARLLVDEDQTVTRGQKLAEWDPYTLPIITERAGLVEYADLLEGVTLVERVDEVTGLTSKVVVDYKQSAKGADLRPRLILKDERGEVLRLANGAEARYFLSPDSILSVENGASVHAGDVLARIPREGSKTRDITGGLPRVAELFEARRPKDHAIIAETDGRVEFGKDYKAKRRIIVKNDETGEETEYLVPKGKHVSVQEGDYVHRGDPLVDGPRVPHDILRVLGVEALSEYLINEIQDVYRLQGVKINDKHIEVVVRQMLQKIEITEPGDTTYLVGELVDRIEFDEENERRLRAGERPAGGLPVLQGITKASLQTLSFISAASFQETTRVLTEAATAGKTDQLLGLKENVIVGRLIPAGTGSVMSRLRSIAAGRDRSTLAATRPALPARDEVSAD.

Zn(2+) is bound by residues Cys70, Cys72, Cys85, and Cys88. Positions 461, 463, and 465 each coordinate Mg(2+). The Zn(2+) site is built by Cys808, Cys882, Cys889, and Cys892.

Belongs to the RNA polymerase beta' chain family. In terms of assembly, the RNAP catalytic core consists of 2 alpha, 1 beta, 1 beta' and 1 omega subunit. When a sigma factor is associated with the core the holoenzyme is formed, which can initiate transcription. Requires Mg(2+) as cofactor. The cofactor is Zn(2+).

It carries out the reaction RNA(n) + a ribonucleoside 5'-triphosphate = RNA(n+1) + diphosphate. Functionally, DNA-dependent RNA polymerase catalyzes the transcription of DNA into RNA using the four ribonucleoside triphosphates as substrates. This chain is DNA-directed RNA polymerase subunit beta', found in Acidiphilium cryptum (strain JF-5).